The sequence spans 121 residues: Large ribosomal subunit protein uL14 (121 aa).

Belongs to the universal ribosomal protein uL14 family. Part of the 50S ribosomal subunit. Forms a cluster with proteins L3 and L19. In the 70S ribosome, L14 and L19 interact and together make contacts with the 16S rRNA in bridges B5 and B8.

Its function is as follows. Binds to 23S rRNA. Forms part of two intersubunit bridges in the 70S ribosome. The sequence is that of Large ribosomal subunit protein uL14 from Pseudoalteromonas atlantica (strain T6c / ATCC BAA-1087).